Here is a 784-residue protein sequence, read N- to C-terminus: Homeobox-leucine zipper protein ROC2 (784 aa).

Positions 60-113 (AESGDNMIRSRASDPLGGDEFESKSGSENVDGVSVDDQDPNQRPRKKRYHRHTQ) are disordered. Residues 102 to 113 (RPRKKRYHRHTQ) show a composition bias toward basic residues. Residues 104-163 (RKKRYHRHTQHQIQEMEAFFKECPHPDDKQRKELSRELGLEPLQVKFWFQNKRTQMKNQH) constitute a DNA-binding region (homeobox). Residues 158–234 (QMKNQHERHE…DRISAIAAKY (77 aa)) are a coiled coil. The START domain maps to 286–523 (SEVDKPMIVE…LDRQCERLAS (238 aa)).

This sequence belongs to the HD-ZIP homeobox family. Class IV subfamily.

The protein localises to the nucleus. Its function is as follows. Probable transcription factor. The polypeptide is Homeobox-leucine zipper protein ROC2 (ROC2) (Oryza sativa subsp. japonica (Rice)).